We begin with the raw amino-acid sequence, 159 residues long: Lipoprotein signal peptidase (159 aa).

The next 3 helical transmembrane spans lie at 4 to 24 (PYFVSITLFITIAVLILDQVT), 64 to 84 (MSFFFIVTIVVLGLLVFFYIK), and 88 to 108 (GNFLMQVAISLLFAGALGNFI). Residues aspartate 118 and aspartate 136 contribute to the active site. A helical membrane pass occupies residues 131 to 151 (IFNGADSSLTIGVILVLIALL).

It belongs to the peptidase A8 family.

It localises to the cell membrane. The enzyme catalyses Release of signal peptides from bacterial membrane prolipoproteins. Hydrolyzes -Xaa-Yaa-Zaa-|-(S,diacylglyceryl)Cys-, in which Xaa is hydrophobic (preferably Leu), and Yaa (Ala or Ser) and Zaa (Gly or Ala) have small, neutral side chains.. It participates in protein modification; lipoprotein biosynthesis (signal peptide cleavage). Functionally, this protein specifically catalyzes the removal of signal peptides from prolipoproteins. In Staphylococcus carnosus (strain TM300), this protein is Lipoprotein signal peptidase.